A 917-amino-acid chain; its full sequence is Bifunctional aspartokinase/homoserine dehydrogenase 2, chloroplastic (917 aa).

Residues 1 to 89 (MQGLAVSCQL…EVNTYLPKGD (89 aa)) constitute a chloroplast transit peptide. The aspartokinase stretch occupies residues 90–338 (MWSVHKFGGT…VSEAVILSTL (249 aa)). An interface region spans residues 339–563 (SYQEAWEMSY…LSKTTLAVGI (225 aa)). ACT domains follow at residues 413–488 (VEGT…VING) and 494–571 (AVGL…LIGG). A homoserine dehydrogenase region spans residues 564 to 917 (IGPGLIGGAL…RLASYLGAPS (354 aa)). The NAD(+) site is built by Ile569 and Thr650. NADP(+) contacts are provided by Ile569, Thr650, and Lys674. Residues Ile569, Thr650, and Lys674 each contribute to the NADPH site. Glu701, Val704, Ala706, and Leu708 together coordinate Na(+). 2 residues coordinate NADP(+): Gly759 and Glu762. L-homoserine is bound by residues Glu762 and Asp773. Lys777 acts as the Proton donor in catalysis. Gly894 serves as a coordination point for NAD(+). An NADP(+)-binding site is contributed by Gly894. Gly894 contributes to the NADPH binding site.

In the N-terminal section; belongs to the aspartokinase family. The protein in the C-terminal section; belongs to the homoserine dehydrogenase family. Homo- or heterodimer. The cofactor is a metal cation.

The protein resides in the plastid. It is found in the chloroplast. The catalysed reaction is L-homoserine + NADP(+) = L-aspartate 4-semialdehyde + NADPH + H(+). It carries out the reaction L-homoserine + NAD(+) = L-aspartate 4-semialdehyde + NADH + H(+). It catalyses the reaction L-aspartate + ATP = 4-phospho-L-aspartate + ADP. It functions in the pathway amino-acid biosynthesis; L-lysine biosynthesis via DAP pathway; (S)-tetrahydrodipicolinate from L-aspartate: step 1/4. It participates in amino-acid biosynthesis; L-methionine biosynthesis via de novo pathway; L-homoserine from L-aspartate: step 1/3. The protein operates within amino-acid biosynthesis; L-methionine biosynthesis via de novo pathway; L-homoserine from L-aspartate: step 3/3. Its pathway is amino-acid biosynthesis; L-threonine biosynthesis; L-threonine from L-aspartate: step 1/5. It functions in the pathway amino-acid biosynthesis; L-threonine biosynthesis; L-threonine from L-aspartate: step 3/5. Functionally, bifunctional aspartate kinase and homoserine dehydrogenase that catalyzes the first and the third steps toward the synthesis of lysine, methionine and threonine from aspartate. The polypeptide is Bifunctional aspartokinase/homoserine dehydrogenase 2, chloroplastic (AKHSDH2) (Zea mays (Maize)).